The sequence spans 741 residues: Moderate conductance mechanosensitive channel YbiO (741 aa).

Positions 1-18 (MRWILFILFCLLGAPAHA) are cleaved as a signal peptide. Residues 22 to 42 (PGVTTTTTTDSTTEPAPEPDI) are disordered. The segment covering 25–34 (TTTTTTDSTT) has biased composition (low complexity). 11 helical membrane-spanning segments follow: residues 143-163 (MLAVLVFGFYWLIRLCALPLY), 185-205 (AMIIGAFIIDLLLLALTLFVG), 225-245 (LFLNAFALIEFFKAVLRLIFC), 268-288 (LSWLSSLIGYGLIVAVPIISN), 294-314 (IGALANVIIMLCMTVWALYLI), 343-363 (FALVWHWLASAYFIVLFFFSL), 372-392 (FMMGATVRSLAIIGIAAFVSG), 432-452 (ILTVCVAVMLLLSAWGLFDFW), 466-486 (ILIRIALILFFSAVGWTVLAS), 509-529 (LLTLFRNALAVIISTITIMIV), and 533-553 (IGVNIAPLLAGAGALGLAISF).

The protein belongs to the MscS (TC 1.A.23) family. As to quaternary structure, homoheptamer.

The protein resides in the cell inner membrane. Functionally, mechanosensitive channel that protects cells against hypoosmotic stress when highly overexpressed. This is Moderate conductance mechanosensitive channel YbiO (ybiO) from Escherichia coli (strain K12).